Here is a 630-residue protein sequence, read N- to C-terminus: ATP synthase subunit alpha (630 aa).

Residue 173–180 participates in ATP binding; sequence GDRQTGKT. Positions 592-630 are disordered; sequence AGGASTAADEDGAGDDEEEAPAPKAKSKNAKSASKAKEK. Residues 599-611 are compositionally biased toward acidic residues; it reads ADEDGAGDDEEEA.

The protein belongs to the ATPase alpha/beta chains family. In terms of assembly, F-type ATPases have 2 components, CF(1) - the catalytic core - and CF(0) - the membrane proton channel. CF(1) has five subunits: alpha(3), beta(3), gamma(1), delta(1), epsilon(1). CF(0) has three main subunits: a(1), b(2) and c(9-12). The alpha and beta chains form an alternating ring which encloses part of the gamma chain. CF(1) is attached to CF(0) by a central stalk formed by the gamma and epsilon chains, while a peripheral stalk is formed by the delta and b chains.

It localises to the cell inner membrane. It carries out the reaction ATP + H2O + 4 H(+)(in) = ADP + phosphate + 5 H(+)(out). Its function is as follows. Produces ATP from ADP in the presence of a proton gradient across the membrane. The alpha chain is a regulatory subunit. The protein is ATP synthase subunit alpha of Sorangium cellulosum (strain So ce56) (Polyangium cellulosum (strain So ce56)).